Consider the following 36-residue polypeptide: Dermonecrotic toxin LgSicTox-beta-LOXN2 (36 aa).

It belongs to the arthropod phospholipase D family. Class II subfamily. It depends on Mg(2+) as a cofactor. Post-translationally, contains 2 disulfide bonds. As to expression, expressed by the venom gland.

Its subcellular location is the secreted. The catalysed reaction is an N-(acyl)-sphingosylphosphocholine = an N-(acyl)-sphingosyl-1,3-cyclic phosphate + choline. It carries out the reaction an N-(acyl)-sphingosylphosphoethanolamine = an N-(acyl)-sphingosyl-1,3-cyclic phosphate + ethanolamine. The enzyme catalyses a 1-acyl-sn-glycero-3-phosphocholine = a 1-acyl-sn-glycero-2,3-cyclic phosphate + choline. It catalyses the reaction a 1-acyl-sn-glycero-3-phosphoethanolamine = a 1-acyl-sn-glycero-2,3-cyclic phosphate + ethanolamine. Functionally, dermonecrotic toxins cleave the phosphodiester linkage between the phosphate and headgroup of certain phospholipids (sphingolipid and lysolipid substrates), forming an alcohol (often choline) and a cyclic phosphate. This toxin acts on sphingomyelin (SM). It may also act on ceramide phosphoethanolamine (CPE), lysophosphatidylcholine (LPC) and lysophosphatidylethanolamine (LPE), but not on lysophosphatidylserine (LPS), and lysophosphatidylglycerol (LPG). It acts by transphosphatidylation, releasing exclusively cyclic phosphate products as second products. Induces dermonecrosis, hemolysis, increased vascular permeability, edema, inflammatory response, and platelet aggregation. This chain is Dermonecrotic toxin LgSicTox-beta-LOXN2, found in Loxosceles gaucho (Spider).